The following is a 253-amino-acid chain: Triosephosphate isomerase (253 aa).

9–11 contacts substrate; it reads NWK. His94 serves as the catalytic Electrophile. The active-site Proton acceptor is the Glu163. Residues Gly169, Ser209, and 230 to 231 contribute to the substrate site; that span reads GG.

The protein belongs to the triosephosphate isomerase family. In terms of assembly, homodimer.

The protein localises to the cytoplasm. The catalysed reaction is D-glyceraldehyde 3-phosphate = dihydroxyacetone phosphate. It functions in the pathway carbohydrate biosynthesis; gluconeogenesis. The protein operates within carbohydrate degradation; glycolysis; D-glyceraldehyde 3-phosphate from glycerone phosphate: step 1/1. Involved in the gluconeogenesis. Catalyzes stereospecifically the conversion of dihydroxyacetone phosphate (DHAP) to D-glyceraldehyde-3-phosphate (G3P). The polypeptide is Triosephosphate isomerase (Dehalococcoides mccartyi (strain ATCC BAA-2100 / JCM 16839 / KCTC 5957 / BAV1)).